Here is a 222-residue protein sequence, read N- to C-terminus: Probable transaldolase (222 aa).

The Schiff-base intermediate with substrate role is filled by Lys91.

This sequence belongs to the transaldolase family. Type 3B subfamily.

Its subcellular location is the cytoplasm. The catalysed reaction is D-sedoheptulose 7-phosphate + D-glyceraldehyde 3-phosphate = D-erythrose 4-phosphate + beta-D-fructose 6-phosphate. It participates in carbohydrate degradation; pentose phosphate pathway; D-glyceraldehyde 3-phosphate and beta-D-fructose 6-phosphate from D-ribose 5-phosphate and D-xylulose 5-phosphate (non-oxidative stage): step 2/3. Its function is as follows. Transaldolase is important for the balance of metabolites in the pentose-phosphate pathway. The sequence is that of Probable transaldolase from Chlorobaculum parvum (strain DSM 263 / NCIMB 8327) (Chlorobium vibrioforme subsp. thiosulfatophilum).